Here is a 304-residue protein sequence, read N- to C-terminus: Energy-coupling factor transporter ATP-binding protein EcfA2 (304 aa).

The ABC transporter domain occupies 11–260 (LKADEILAVS…QTFLEKTTIV (250 aa)). An ATP-binding site is contributed by 54-61 (GDSGSGKS).

Belongs to the ABC transporter superfamily. Energy-coupling factor EcfA family. In terms of assembly, forms a stable energy-coupling factor (ECF) transporter complex composed of 2 membrane-embedded substrate-binding proteins (S component), 2 ATP-binding proteins (A component) and 2 transmembrane proteins (T component).

It is found in the cell membrane. ATP-binding (A) component of a common energy-coupling factor (ECF) ABC-transporter complex. Unlike classic ABC transporters this ECF transporter provides the energy necessary to transport a number of different substrates. This is Energy-coupling factor transporter ATP-binding protein EcfA2 from Mycoplasma genitalium (strain ATCC 33530 / DSM 19775 / NCTC 10195 / G37) (Mycoplasmoides genitalium).